The following is a 201-amino-acid chain: Holliday junction branch migration complex subunit RuvA (201 aa).

The segment at 1–63 (MIEFVRGYVD…EDTLALYGFR (63 aa)) is domain I. Residues 64–142 (TREERTLFAK…AVTAKTFPDL (79 aa)) are domain II. The segment at 143 to 153 (FHLQEESARPH) is flexible linker. The interval 153–201 (HLSALEEAIEALKALGYAEREIQKVVPSLMKENLSTDQYVKRALQQLLK) is domain III.

The protein belongs to the RuvA family. In terms of assembly, homotetramer. Forms an RuvA(8)-RuvB(12)-Holliday junction (HJ) complex. HJ DNA is sandwiched between 2 RuvA tetramers; dsDNA enters through RuvA and exits via RuvB. An RuvB hexamer assembles on each DNA strand where it exits the tetramer. Each RuvB hexamer is contacted by two RuvA subunits (via domain III) on 2 adjacent RuvB subunits; this complex drives branch migration. In the full resolvosome a probable DNA-RuvA(4)-RuvB(12)-RuvC(2) complex forms which resolves the HJ.

The protein localises to the cytoplasm. Functionally, the RuvA-RuvB-RuvC complex processes Holliday junction (HJ) DNA during genetic recombination and DNA repair, while the RuvA-RuvB complex plays an important role in the rescue of blocked DNA replication forks via replication fork reversal (RFR). RuvA specifically binds to HJ cruciform DNA, conferring on it an open structure. The RuvB hexamer acts as an ATP-dependent pump, pulling dsDNA into and through the RuvAB complex. HJ branch migration allows RuvC to scan DNA until it finds its consensus sequence, where it cleaves and resolves the cruciform DNA. This is Holliday junction branch migration complex subunit RuvA from Geobacillus sp. (strain WCH70).